We begin with the raw amino-acid sequence, 680 residues long: Viral IRF2-like protein (680 aa).

Residues 7–103 (SEWLTDFIID…RPFTIYKGKM (97 aa)) constitute a DNA-binding region (IRF tryptophan pentad repeat). Disordered stretches follow at residues 156–201 (SLRK…SENE), 220–257 (EEPE…HVHT), 343–365 (ETAS…ESVS), and 403–423 (ASPQ…ESVS). The span at 168–188 (KQAAAVATPTTSSAAEVSSRS) shows a compositional bias: low complexity. Positions 191–200 (EDTESSDSEN) are enriched in acidic residues. Over residues 220–240 (EEPEPSGFGSSGQSSSLLAPD) the composition is skewed to low complexity.

Belongs to the IRF family. Interacts with host EIF2AK2/PKR. Interacts with host USP7.

It is found in the host nucleus. The protein localises to the host cytoplasm. In terms of biological role, DNA-binding transcription factor that plays a role in the modulation of host immune response. Acts by interacting with host EIF2AK2/PKR and inhibiting its activation. In turn, EIF2AK2/PKR substrates including EIF2S1 or histone H2A are not phosphorylated. Inhibits type I interferon signaling by targeting host IRF3 during viral reactivation from latency. Attenuates the transcriptional activity of host FOXO3 via activation of the AKT1 signaling pathway, inhibiting FOXO3-mediated apoptosis. Also suppresses the expression of viral early lytic genes in both newly infected and reactivated infected host cells allowing regulation of viral life cycle by harnessing the interferon pathway. Mechanistically, promotes host PML bodies formation as well as host antiviral restriction factors IFIT1-3 expression leading to inhibition of viral early lytic proteins. Also regulates host TRAF3 and TRAF6 ubiquitination by interacting with USP7 deubiquitinase thereby influencing TRAF3/6-mediated signal transduction. This is Viral IRF2-like protein (vIRF-2) from Human herpesvirus 8 type P (isolate GK18) (HHV-8).